Reading from the N-terminus, the 154-residue chain is Spermatogenesis-associated protein 19, mitochondrial (154 aa).

The N-terminal 24 residues, 1-24, are a transit peptide targeting the mitochondrion; sequence MIITTWIMYIFARKTVGLPFPPRV. Phosphoserine occurs at positions 26 and 116.

As to expression, expressed specifically in adult testis (at protein level).

The protein localises to the mitochondrion outer membrane. Its subcellular location is the mitochondrion. It localises to the cell projection. The protein resides in the cilium. It is found in the flagellum. Its function is as follows. Essential for sperm motility and male fertility. Plays an important role in sperm motility by regulating the organization and function of the mitochondria and is also required for correct sperm midpiece assembly. This chain is Spermatogenesis-associated protein 19, mitochondrial (Spata19), found in Mus musculus (Mouse).